A 273-amino-acid polypeptide reads, in one-letter code: Light-independent protochlorophyllide reductase iron-sulfur ATP-binding protein (273 aa).

ATP contacts are provided by residues 12-17 (GIGKST) and K41. S16 is a binding site for Mg(2+). [4Fe-4S] cluster contacts are provided by C97 and C131. Residue 182–183 (NR) participates in ATP binding.

This sequence belongs to the NifH/BchL/ChlL family. In terms of assembly, homodimer. Protochlorophyllide reductase is composed of three subunits; BchL, BchN and BchB. The cofactor is [4Fe-4S] cluster.

The enzyme catalyses chlorophyllide a + oxidized 2[4Fe-4S]-[ferredoxin] + 2 ADP + 2 phosphate = protochlorophyllide a + reduced 2[4Fe-4S]-[ferredoxin] + 2 ATP + 2 H2O. The protein operates within porphyrin-containing compound metabolism; bacteriochlorophyll biosynthesis (light-independent). In terms of biological role, component of the dark-operative protochlorophyllide reductase (DPOR) that uses Mg-ATP and reduced ferredoxin to reduce ring D of protochlorophyllide (Pchlide) to form chlorophyllide a (Chlide). This reaction is light-independent. The L component serves as a unique electron donor to the NB-component of the complex, and binds Mg-ATP. This chain is Light-independent protochlorophyllide reductase iron-sulfur ATP-binding protein, found in Chloroflexus aurantiacus (strain ATCC 29364 / DSM 637 / Y-400-fl).